The chain runs to 445 residues: Phosphoglucosamine mutase (445 aa).

The Phosphoserine intermediate role is filled by Ser102. Mg(2+) contacts are provided by Ser102, Asp241, Asp243, and Asp245. Ser102 carries the post-translational modification Phosphoserine.

It belongs to the phosphohexose mutase family. Mg(2+) is required as a cofactor. Post-translationally, activated by phosphorylation.

It carries out the reaction alpha-D-glucosamine 1-phosphate = D-glucosamine 6-phosphate. In terms of biological role, catalyzes the conversion of glucosamine-6-phosphate to glucosamine-1-phosphate. The chain is Phosphoglucosamine mutase from Edwardsiella ictaluri (strain 93-146).